The chain runs to 339 residues: Glycerol-3-phosphate dehydrogenase [NAD(P)+] (339 aa).

Residues Ser-11, Trp-12, and Lys-109 each coordinate NADPH. Lys-109, Gly-140, and Ser-142 together coordinate sn-glycerol 3-phosphate. Residue Ala-144 participates in NADPH binding. Positions 195, 249, 259, 260, and 261 each coordinate sn-glycerol 3-phosphate. The active-site Proton acceptor is the Lys-195. Arg-260 contributes to the NADPH binding site. Residues Val-284 and Glu-286 each contribute to the NADPH site.

It belongs to the NAD-dependent glycerol-3-phosphate dehydrogenase family.

Its subcellular location is the cytoplasm. It carries out the reaction sn-glycerol 3-phosphate + NAD(+) = dihydroxyacetone phosphate + NADH + H(+). It catalyses the reaction sn-glycerol 3-phosphate + NADP(+) = dihydroxyacetone phosphate + NADPH + H(+). It participates in membrane lipid metabolism; glycerophospholipid metabolism. Catalyzes the reduction of the glycolytic intermediate dihydroxyacetone phosphate (DHAP) to sn-glycerol 3-phosphate (G3P), the key precursor for phospholipid synthesis. This chain is Glycerol-3-phosphate dehydrogenase [NAD(P)+], found in Lactobacillus johnsonii (strain CNCM I-12250 / La1 / NCC 533).